We begin with the raw amino-acid sequence, 327 residues long: Lipoyl synthase (327 aa).

Residues Cys-75, Cys-80, Cys-86, Cys-101, Cys-105, Cys-108, and Ser-315 each coordinate [4Fe-4S] cluster. The region spanning 87-304 (FGNGTATFMI…EEEAYKMGFS (218 aa)) is the Radical SAM core domain.

Belongs to the radical SAM superfamily. Lipoyl synthase family. It depends on [4Fe-4S] cluster as a cofactor.

The protein localises to the cytoplasm. It carries out the reaction [[Fe-S] cluster scaffold protein carrying a second [4Fe-4S](2+) cluster] + N(6)-octanoyl-L-lysyl-[protein] + 2 oxidized [2Fe-2S]-[ferredoxin] + 2 S-adenosyl-L-methionine + 4 H(+) = [[Fe-S] cluster scaffold protein] + N(6)-[(R)-dihydrolipoyl]-L-lysyl-[protein] + 4 Fe(3+) + 2 hydrogen sulfide + 2 5'-deoxyadenosine + 2 L-methionine + 2 reduced [2Fe-2S]-[ferredoxin]. The protein operates within protein modification; protein lipoylation via endogenous pathway; protein N(6)-(lipoyl)lysine from octanoyl-[acyl-carrier-protein]: step 2/2. Functionally, catalyzes the radical-mediated insertion of two sulfur atoms into the C-6 and C-8 positions of the octanoyl moiety bound to the lipoyl domains of lipoate-dependent enzymes, thereby converting the octanoylated domains into lipoylated derivatives. The chain is Lipoyl synthase from Variovorax paradoxus (strain S110).